The primary structure comprises 419 residues: ADIPOR-like receptor IZH3 (419 aa).

The tract at residues 1 to 65 (MSHPNTHMPR…GEAGGGRSVL (65 aa)) is disordered. At 1 to 147 (MSHPNTHMPR…LNAYGWHNET (147 aa)) the chain is on the lumenal side. A glycan (N-linked (GlcNAc...) asparagine) is linked at asparagine 145. Residues 148 to 168 (INIWSHLVGAAVLAYLLCWGW) traverse the membrane as a helical segment. Topologically, residues 169 to 184 (PRSDVYRAAQVPRLAK) are cytoplasmic. A helical transmembrane segment spans residues 185 to 205 (WAIGAFLACGVKCMASSVAWH). The Lumenal portion of the chain corresponds to 206 to 225 (TFNGTCHLKLRSRFVCVDYT). A glycan (N-linked (GlcNAc...) asparagine) is linked at asparagine 208. The helical transmembrane segment at 226-246 (GITLLVTASVVTTVAVTLYGL) threads the bilayer. At 247–249 (SRP) the chain is on the cytoplasmic side. A helical transmembrane segment spans residues 250–270 (LMYAYMVASIGLGTAAGVMNW). The Lumenal segment spans residues 271 to 283 (SPHFDRPEARPLR). The chain crosses the membrane as a helical span at residues 284–304 (IAVYVGLAALGLVSFVHVWMQ). The Cytoplasmic portion of the chain corresponds to 305-311 (VRWASAH). The helical transmembrane segment at 312–332 (LMAPLVYKSLVWYGIGVVFYA) threads the bilayer. At 333-377 (TLVPERWRSDVTLDCCSGPVHEAACRQFRDLPPVARKDRQFWSLW) the chain is on the lumenal side. A helical transmembrane segment spans residues 378–398 (WVDYFCHSHFLWHVFVVLGVV). The Cytoplasmic segment spans residues 399–419 (GHYRAVLQMSRIVWLDAGRAF).

It belongs to the ADIPOR family.

It localises to the endoplasmic reticulum membrane. ADIPOR-like receptor involved in zinc metabolism either by altering membrane sterol content or by directly altering cellular zinc levels. The chain is ADIPOR-like receptor IZH3 (IZH3) from Eremothecium gossypii (strain ATCC 10895 / CBS 109.51 / FGSC 9923 / NRRL Y-1056) (Yeast).